Here is a 419-residue protein sequence, read N- to C-terminus: UDP-N-acetylglucosamine 1-carboxyvinyltransferase (419 aa).

22-23 (KN) lines the phosphoenolpyruvate pocket. Arginine 95 contacts UDP-N-acetyl-alpha-D-glucosamine. Catalysis depends on cysteine 119, which acts as the Proton donor. Cysteine 119 carries the post-translational modification 2-(S-cysteinyl)pyruvic acid O-phosphothioketal. UDP-N-acetyl-alpha-D-glucosamine is bound by residues 164 to 167 (KVSV), aspartate 308, and isoleucine 330.

It belongs to the EPSP synthase family. MurA subfamily.

The protein localises to the cytoplasm. The catalysed reaction is phosphoenolpyruvate + UDP-N-acetyl-alpha-D-glucosamine = UDP-N-acetyl-3-O-(1-carboxyvinyl)-alpha-D-glucosamine + phosphate. It participates in cell wall biogenesis; peptidoglycan biosynthesis. Its function is as follows. Cell wall formation. Adds enolpyruvyl to UDP-N-acetylglucosamine. The chain is UDP-N-acetylglucosamine 1-carboxyvinyltransferase from Rickettsia canadensis (strain McKiel).